The chain runs to 402 residues: 4-hydroxy-3-methylbut-2-enyl diphosphate reductase (402 aa).

Cys66 lines the [4Fe-4S] cluster pocket. (2E)-4-hydroxy-3-methylbut-2-enyl diphosphate is bound at residue His96. Position 96 (His96) interacts with dimethylallyl diphosphate. Position 96 (His96) interacts with isopentenyl diphosphate. Cys157 lines the [4Fe-4S] cluster pocket. Residue His185 coordinates (2E)-4-hydroxy-3-methylbut-2-enyl diphosphate. His185 is a binding site for dimethylallyl diphosphate. Residue His185 participates in isopentenyl diphosphate binding. Glu187 acts as the Proton donor in catalysis. Thr250 lines the (2E)-4-hydroxy-3-methylbut-2-enyl diphosphate pocket. Cys288 is a [4Fe-4S] cluster binding site. The (2E)-4-hydroxy-3-methylbut-2-enyl diphosphate site is built by Ser317, Ser318, Asn319, and Ser379. Residues Ser317, Ser318, Asn319, and Ser379 each contribute to the dimethylallyl diphosphate site. Residues Ser317, Ser318, Asn319, and Ser379 each contribute to the isopentenyl diphosphate site.

The protein belongs to the IspH family. [4Fe-4S] cluster serves as cofactor.

The enzyme catalyses isopentenyl diphosphate + 2 oxidized [2Fe-2S]-[ferredoxin] + H2O = (2E)-4-hydroxy-3-methylbut-2-enyl diphosphate + 2 reduced [2Fe-2S]-[ferredoxin] + 2 H(+). It catalyses the reaction dimethylallyl diphosphate + 2 oxidized [2Fe-2S]-[ferredoxin] + H2O = (2E)-4-hydroxy-3-methylbut-2-enyl diphosphate + 2 reduced [2Fe-2S]-[ferredoxin] + 2 H(+). It participates in isoprenoid biosynthesis; dimethylallyl diphosphate biosynthesis; dimethylallyl diphosphate from (2E)-4-hydroxy-3-methylbutenyl diphosphate: step 1/1. Its pathway is isoprenoid biosynthesis; isopentenyl diphosphate biosynthesis via DXP pathway; isopentenyl diphosphate from 1-deoxy-D-xylulose 5-phosphate: step 6/6. Catalyzes the conversion of 1-hydroxy-2-methyl-2-(E)-butenyl 4-diphosphate (HMBPP) into a mixture of isopentenyl diphosphate (IPP) and dimethylallyl diphosphate (DMAPP). Acts in the terminal step of the DOXP/MEP pathway for isoprenoid precursor biosynthesis. In Thermosynechococcus vestitus (strain NIES-2133 / IAM M-273 / BP-1), this protein is 4-hydroxy-3-methylbut-2-enyl diphosphate reductase.